A 931-amino-acid chain; its full sequence is Translation initiation factor IF-2 (931 aa).

Residues 32 to 310 (KSASSTVEPP…SSKARKNRLA (279 aa)) form a disordered region. The span at 50–59 (FASSGQGNAS) shows a compositional bias: polar residues. The segment covering 82-96 (PAAPSAPKPAAPAAP) has biased composition (pro residues). Positions 156–168 (GNAPQGGNNANGA) are enriched in low complexity. Gly residues-rich tracts occupy residues 217 to 238 (RPGQ…GGAK), 248 to 271 (GQGG…GFQG), and 281 to 298 (ARGG…GRQG). The tr-type G domain occupies 424 to 596 (PRPPVVTVMG…VLLTADAELD (173 aa)). Positions 433-440 (GHVDHGKT) are G1. Residue 433–440 (GHVDHGKT) participates in GTP binding. The G2 stretch occupies residues 458–462 (GITQR). The tract at residues 483–486 (DTPG) is G3. GTP is bound by residues 483–487 (DTPGH) and 537–540 (NKID). The segment at 537-540 (NKID) is G4. The G5 stretch occupies residues 573-575 (SAK).

It belongs to the TRAFAC class translation factor GTPase superfamily. Classic translation factor GTPase family. IF-2 subfamily.

The protein resides in the cytoplasm. In terms of biological role, one of the essential components for the initiation of protein synthesis. Protects formylmethionyl-tRNA from spontaneous hydrolysis and promotes its binding to the 30S ribosomal subunits. Also involved in the hydrolysis of GTP during the formation of the 70S ribosomal complex. In Bifidobacterium adolescentis (strain ATCC 15703 / DSM 20083 / NCTC 11814 / E194a), this protein is Translation initiation factor IF-2.